The following is a 49-amino-acid chain: Small, acid-soluble spore protein O (49 aa).

Positions 1–49 are disordered; sequence MGKRKANHTISGMNAASAQGQGAGYNEEFANENLTPAERQNNKKRKKNQ. Over residues 8–20 the composition is skewed to polar residues; sequence HTISGMNAASAQG.

This sequence belongs to the SspO family.

The protein localises to the spore core. The sequence is that of Small, acid-soluble spore protein O from Bacillus anthracis (strain A0248).